The following is a 120-amino-acid chain: Large ribosomal subunit protein bL20c (120 aa).

This sequence belongs to the bacterial ribosomal protein bL20 family.

It is found in the plastid. Its function is as follows. Binds directly to 23S ribosomal RNA and is necessary for the in vitro assembly process of the 50S ribosomal subunit. It is not involved in the protein synthesizing functions of that subunit. The sequence is that of Large ribosomal subunit protein bL20c (rpl20) from Cuscuta gronovii (Common dodder).